The chain runs to 448 residues: Inositol hexakisphosphate kinase 2 (448 aa).

ATP contacts are provided by residues glutamate 229–leucine 231 and aspartate 242. Substrate-binding positions include proline 238–glycine 246, lysine 244, and lysine 258–lysine 265. Residue aspartate 405 participates in ATP binding. Histidine 408 lines the substrate pocket.

The protein belongs to the inositol phosphokinase (IPK) family. In terms of tissue distribution, highly expressed in brain and lung, and at slightly lower levels in liver, kidney and testis.

Its subcellular location is the nucleus. The catalysed reaction is 1D-myo-inositol hexakisphosphate + ATP = 5-diphospho-1D-myo-inositol 1,2,3,4,6-pentakisphosphate + ADP. Its pathway is phospholipid metabolism; phosphatidylinositol metabolism. In terms of biological role, converts inositol hexakisphosphate (InsP6) to diphosphoinositol pentakisphosphate (InsP7/PP-InsP5). May play a role in the regulation of Na(+)-dependent phosphate cotransport, possibly via its role in diphosphoinositol pentakisphosphate (InsP7/PP-InsP5) biosynthesis. The polypeptide is Inositol hexakisphosphate kinase 2 (Ip6k2) (Mus musculus (Mouse)).